The sequence spans 611 residues: Glutamine--fructose-6-phosphate aminotransferase [isomerizing] (611 aa).

The active-site Nucleophile; for GATase activity is the Cys2. One can recognise a Glutamine amidotransferase type-2 domain in the interval 2–219 (CGIVGAVAER…EGDIAEIRRD (218 aa)). SIS domains follow at residues 287-427 (AADL…VRGT) and 460-601 (IAEL…VDQP). Residue Lys606 is the For Fru-6P isomerization activity of the active site.

As to quaternary structure, homodimer.

It is found in the cytoplasm. It catalyses the reaction D-fructose 6-phosphate + L-glutamine = D-glucosamine 6-phosphate + L-glutamate. Its function is as follows. Catalyzes the first step in hexosamine metabolism, converting fructose-6P into glucosamine-6P using glutamine as a nitrogen source. This is Glutamine--fructose-6-phosphate aminotransferase [isomerizing] from Pseudomonas putida (strain ATCC 47054 / DSM 6125 / CFBP 8728 / NCIMB 11950 / KT2440).